Reading from the N-terminus, the 204-residue chain is HTH-type transcriptional repressor KstR (204 aa).

An HTH tetR-type domain is found at 18–78 (RERRKRILDA…SALGREFERI (61 aa)). Positions 41–60 (QMRAVAERADVAVGTLYRYF) form a DNA-binding region, H-T-H motif.

In terms of assembly, homodimer.

In terms of biological role, controls the expression of genes used for utilizing diverse lipids as energy sources. The chain is HTH-type transcriptional repressor KstR (kstR) from Mycolicibacterium smegmatis (strain ATCC 700084 / mc(2)155) (Mycobacterium smegmatis).